The sequence spans 338 residues: 4-hydroxy-3-methylbut-2-enyl diphosphate reductase (338 aa).

Cys21 contacts [4Fe-4S] cluster. Residues His50 and His83 each coordinate (2E)-4-hydroxy-3-methylbut-2-enyl diphosphate. Dimethylallyl diphosphate is bound by residues His50 and His83. Isopentenyl diphosphate-binding residues include His50 and His83. Residue Cys105 participates in [4Fe-4S] cluster binding. His133 is a binding site for (2E)-4-hydroxy-3-methylbut-2-enyl diphosphate. A dimethylallyl diphosphate-binding site is contributed by His133. His133 lines the isopentenyl diphosphate pocket. Glu135 acts as the Proton donor in catalysis. Thr173 is a binding site for (2E)-4-hydroxy-3-methylbut-2-enyl diphosphate. Cys203 contributes to the [4Fe-4S] cluster binding site. Residues Ser231, Ser232, Asn233, and Ser276 each coordinate (2E)-4-hydroxy-3-methylbut-2-enyl diphosphate. Positions 231, 232, 233, and 276 each coordinate dimethylallyl diphosphate. Isopentenyl diphosphate contacts are provided by Ser231, Ser232, Asn233, and Ser276.

The protein belongs to the IspH family. The cofactor is [4Fe-4S] cluster.

The enzyme catalyses isopentenyl diphosphate + 2 oxidized [2Fe-2S]-[ferredoxin] + H2O = (2E)-4-hydroxy-3-methylbut-2-enyl diphosphate + 2 reduced [2Fe-2S]-[ferredoxin] + 2 H(+). It catalyses the reaction dimethylallyl diphosphate + 2 oxidized [2Fe-2S]-[ferredoxin] + H2O = (2E)-4-hydroxy-3-methylbut-2-enyl diphosphate + 2 reduced [2Fe-2S]-[ferredoxin] + 2 H(+). It participates in isoprenoid biosynthesis; dimethylallyl diphosphate biosynthesis; dimethylallyl diphosphate from (2E)-4-hydroxy-3-methylbutenyl diphosphate: step 1/1. Its pathway is isoprenoid biosynthesis; isopentenyl diphosphate biosynthesis via DXP pathway; isopentenyl diphosphate from 1-deoxy-D-xylulose 5-phosphate: step 6/6. Its function is as follows. Catalyzes the conversion of 1-hydroxy-2-methyl-2-(E)-butenyl 4-diphosphate (HMBPP) into a mixture of isopentenyl diphosphate (IPP) and dimethylallyl diphosphate (DMAPP). Acts in the terminal step of the DOXP/MEP pathway for isoprenoid precursor biosynthesis. The protein is 4-hydroxy-3-methylbut-2-enyl diphosphate reductase of Streptomyces avermitilis (strain ATCC 31267 / DSM 46492 / JCM 5070 / NBRC 14893 / NCIMB 12804 / NRRL 8165 / MA-4680).